Consider the following 79-residue polypeptide: Cyclin-dependent kinases regulatory subunit 1 (79 aa).

Ser2 carries the N-acetylserine modification.

The protein belongs to the CKS family. In terms of assembly, forms a homohexamer that can probably bind six kinase subunits.

Binds to the catalytic subunit of the cyclin dependent kinases and is essential for their biological function. This Bos taurus (Bovine) protein is Cyclin-dependent kinases regulatory subunit 1 (CKS1B).